The primary structure comprises 529 residues: Arginine--tRNA ligase (529 aa).

A 'HIGH' region motif is present at residues 113–123; that stretch reads ANPTGPLHIGH.

This sequence belongs to the class-I aminoacyl-tRNA synthetase family. In terms of assembly, monomer.

Its subcellular location is the cytoplasm. The catalysed reaction is tRNA(Arg) + L-arginine + ATP = L-arginyl-tRNA(Arg) + AMP + diphosphate. The protein is Arginine--tRNA ligase of Aliarcobacter butzleri (strain RM4018) (Arcobacter butzleri).